A 315-amino-acid polypeptide reads, in one-letter code: Malate dehydrogenase (315 aa).

Residues 7-12 (GAGNIG) and D32 contribute to the NAD(+) site. 2 residues coordinate substrate: R81 and R87. Residues N94 and 117 to 119 (VTN) each bind NAD(+). N119 and R150 together coordinate substrate. H174 acts as the Proton acceptor in catalysis.

This sequence belongs to the LDH/MDH superfamily. MDH type 3 family.

It carries out the reaction (S)-malate + NAD(+) = oxaloacetate + NADH + H(+). Functionally, catalyzes the reversible oxidation of malate to oxaloacetate. This chain is Malate dehydrogenase, found in Neorickettsia sennetsu (strain ATCC VR-367 / Miyayama) (Ehrlichia sennetsu).